Consider the following 279-residue polypeptide: D-aminoacyl-tRNA deacylase (279 aa).

The tract at residues 81–100 (GRKSLTVHHPGNPTEDNSLG) is disordered.

This sequence belongs to the DtdA deacylase family. In terms of assembly, monomer. The cofactor is Zn(2+).

The catalysed reaction is a D-aminoacyl-tRNA + H2O = a tRNA + a D-alpha-amino acid + H(+). It carries out the reaction glycyl-tRNA(Ala) + H2O = tRNA(Ala) + glycine + H(+). Functionally, D-aminoacyl-tRNA deacylase with broad substrate specificity. By recycling D-aminoacyl-tRNA to D-amino acids and free tRNA molecules, this enzyme counteracts the toxicity associated with the formation of D-aminoacyl-tRNA entities in vivo. The sequence is that of D-aminoacyl-tRNA deacylase from Aeropyrum pernix (strain ATCC 700893 / DSM 11879 / JCM 9820 / NBRC 100138 / K1).